The chain runs to 451 residues: Velvet complex subunit 2 (451 aa).

Disordered regions lie at residues 1–95 (MNTT…PRSI), 205–312 (PGQS…QTNP), and 426–451 (PIRKDGKDGPGKGGKDGSRGDDDDDY). Composition is skewed to polar residues over residues 18–28 (TMPSLHDTTYR), 40–62 (MPQTMASQHSTISAYEQYNNSLP), and 205–217 (PGQSQREPTSPTY). Residues 92 to 428 (PRSITVDGRK…ATQGIKIPIR (337 aa)) form the Velvet domain. The span at 267–283 (PQQSNYYYPQPSQSIPS) shows a compositional bias: low complexity. The span at 427–445 (IRKDGKDGPGKGGKDGSRG) shows a compositional bias: basic and acidic residues.

It belongs to the velvet family. VelB subfamily. Component of the heterotrimeric velvet complex composed of LAE1, VEL1 and VEL2; VEL1 acting as a bridging protein between LAE1 and VEL2. Forms a heterodimeric complex with VOS1; the formation of the VEL2-VOS1 complex is light-dependent.

The protein resides in the nucleus. It localises to the cytoplasm. In terms of biological role, component of the velvet transcription factor complex that controls sexual/asexual developmental ratio in response to light, promoting sexual development in the darkness while stimulating asexual sporulation under illumination. The velvet complex acts as a global regulator for secondary metabolite gene expression. Component of the VEL2-VOS1 heterodimeric complex that plays a dual role in activating genes associated with spore maturation and repressing certain development-associated genes. The VEL2-VOS1 complex binds DNA through the DNA-binding domain of VOS1 that recognizes an 11-nucleotide consensus sequence 5'-CTGGCCGCGGC-3' consisting of two motifs in the promoters of key developmental regulatory genes. Controls the expression of the oxalic acid and melanin gene clusters. Involved in the resistance to oxidative stress. Required for full virulence. The chain is Velvet complex subunit 2 from Botryotinia fuckeliana (strain B05.10) (Noble rot fungus).